The sequence spans 643 residues: MPIITLPDGSQRQFDNPVSVMEVAQSIGAGLAKATIAGRVNGERRDACDIISEDSSLEIITAKDEDGLEIIRHSCAHLLGHAIKQLFPNVKMAIGPTIDNGFYYDVDLDRSLTQEDLDAIEKRMLELAKTNYDVVKKRVSWQEARDTFEKRGEPYKMAILDENIERTATPALYHHEEYIDMCRGPHVPNMRFCHHFKLQKVAGAYWRGDSKNKMLQRIYGTAWADKKQLAEYLTRLEEAAKRDHRRIGKALDLYHMQEEAPGLVFWHNDGWTIFRELETFVRTKLKEYDYQEVKGPFMMDRVLWERTGHWQNYADLMFTTQSENREYAIKPMNCPGHVQIFNQGLKSYRDLPIRMAEFGSCHRNEPSGSLHGLMRVRGFTQDDAHIFCTEDQIESEVTSCIRMVYDIYSTFGFSNIQVKLSTRPENRIGDDAMWDRAEDGLAKALTANGLSYEIQEGEGAFYGPKIEFALRDCLDREWQCGTIQLDFALPGRLDASYVAEDNGRRTPVMIHRAILGSIERFIGIITEEYAGFFPTWLAPTQAVVMNITDSQADYVQKVTKALSDAGIRVKSDLRNEKVGFKVREHTLRRVPYMLVCGDKEIEAGKVSVRTRKGADLGTFTIDEFVEILKNQVKARGLKLLGEE.

The TGS domain occupies 1-61 (MPIITLPDGS…SEDSSLEIIT (61 aa)). The tract at residues 243–534 (DHRRIGKALD…ITEEYAGFFP (292 aa)) is catalytic. Residues C334, H385, and H511 each coordinate Zn(2+).

It belongs to the class-II aminoacyl-tRNA synthetase family. As to quaternary structure, homodimer. Zn(2+) is required as a cofactor.

The protein resides in the cytoplasm. The catalysed reaction is tRNA(Thr) + L-threonine + ATP = L-threonyl-tRNA(Thr) + AMP + diphosphate + H(+). Its function is as follows. Catalyzes the attachment of threonine to tRNA(Thr) in a two-step reaction: L-threonine is first activated by ATP to form Thr-AMP and then transferred to the acceptor end of tRNA(Thr). Also edits incorrectly charged L-seryl-tRNA(Thr). This Actinobacillus pleuropneumoniae serotype 5b (strain L20) protein is Threonine--tRNA ligase.